A 252-amino-acid chain; its full sequence is Imidazole glycerol phosphate synthase subunit HisF (252 aa).

Catalysis depends on residues D11 and D130.

It belongs to the HisA/HisF family. Heterodimer of HisH and HisF.

The protein resides in the cytoplasm. The enzyme catalyses 5-[(5-phospho-1-deoxy-D-ribulos-1-ylimino)methylamino]-1-(5-phospho-beta-D-ribosyl)imidazole-4-carboxamide + L-glutamine = D-erythro-1-(imidazol-4-yl)glycerol 3-phosphate + 5-amino-1-(5-phospho-beta-D-ribosyl)imidazole-4-carboxamide + L-glutamate + H(+). It participates in amino-acid biosynthesis; L-histidine biosynthesis; L-histidine from 5-phospho-alpha-D-ribose 1-diphosphate: step 5/9. In terms of biological role, IGPS catalyzes the conversion of PRFAR and glutamine to IGP, AICAR and glutamate. The HisF subunit catalyzes the cyclization activity that produces IGP and AICAR from PRFAR using the ammonia provided by the HisH subunit. The protein is Imidazole glycerol phosphate synthase subunit HisF of Geobacillus kaustophilus (strain HTA426).